Here is a 213-residue protein sequence, read N- to C-terminus: mRNA-decapping protein D9 (213 aa).

The region spanning 30-209 (KDTHVFAACI…EYLSYIYNML (180 aa)) is the Nudix hydrolase domain. The Nudix box signature appears at 111-132 (GKLDKKESIKDCLRRELKEESD). Glu117 is a binding site for Mg(2+). Glu126 functions as the Nucleophile in the catalytic mechanism. Residues Glu130 and Asp151 each coordinate Mg(2+).

The protein belongs to the Nudix hydrolase family. It depends on Mg(2+) as a cofactor. The cofactor is Mn(2+).

Decapping enzyme required for the removal of the 5'-end m7GpppN cap tethered to viral and host mRNAs to allow their decay in cells. May therefore accelerate viral and cellular mRNA turnover to eliminate competing host mRNAs and allow stage-specific synthesis of viral proteins. Acceleration of the turnover of cellular transcripts may even promote the shutoff of host protein synthesis. Does not cleave unmethylated RNAs or RNAs shorter than 24 nucleotides. The polypeptide is mRNA-decapping protein D9 (Homo sapiens (Human)).